Consider the following 654-residue polypeptide: Macrolide export ATP-binding/permease protein MacB (654 aa).

The region spanning 6–244 (IEISALNRIF…TSASSATDAA (239 aa)) is the ABC transporter domain. An ATP-binding site is contributed by 42-49 (GTSGSGKS). Transmembrane regions (helical) follow at residues 279-299 (LLTM…VAIG), 534-554 (IAVI…LVSV), 584-604 (MVCL…GALF), and 617-637 (VTAI…FGFL).

Belongs to the ABC transporter superfamily. Macrolide exporter (TC 3.A.1.122) family. Homodimer. Part of the tripartite efflux system MacAB-TolC, which is composed of an inner membrane transporter, MacB, a periplasmic membrane fusion protein, MacA, and an outer membrane component, TolC. The complex forms a large protein conduit and can translocate molecules across both the inner and outer membranes. Interacts with MacA.

It is found in the cell inner membrane. In terms of biological role, part of the tripartite efflux system MacAB-TolC. MacB is a non-canonical ABC transporter that contains transmembrane domains (TMD), which form a pore in the inner membrane, and an ATP-binding domain (NBD), which is responsible for energy generation. Confers resistance against macrolides. The sequence is that of Macrolide export ATP-binding/permease protein MacB from Hahella chejuensis (strain KCTC 2396).